An 821-amino-acid polypeptide reads, in one-letter code: Integrator complex assembly factor BRAT1 (821 aa).

The segment at 100–200 (PGLFGEPGPL…WPACAQKIMD (101 aa)) is required for interaction with NDFIP1. HEAT repeat units follow at residues 495 to 531 (PQFLRELFPVLQKRLCHPCWEVRDSALEFLTQLSRHW) and 544 to 576 (SEVPQLALQLLQDPESYVRASAVTAMGQLSSQG). The segment at 741-767 (GSPNTASAEATLPRWRAGEQAQPPGDQ) is disordered. Position 742 is a phosphoserine (Ser742). Residues 819 to 821 (DCY) carry the BRAT1-like motif motif. A Zn(2+)-binding site is contributed by Cys820.

This sequence belongs to the BRAT1 family. Part of the multiprotein complex composed of BRAT1, WDR73, as well as integrator complex subunits INTS9 and INTS11. Interacts with BRCA1 and ATM. Interacts with MTOR and RPTOR. Interacts with NDFIP1. Interacts with SMC1A and PRKDC. Post-translationally, ubiquitinated by NEDD4, NEDD4L and ITCH; mono- and polyubiquitinated forms are detected. Ubiquitously expressed.

The protein resides in the nucleus. Its subcellular location is the cytoplasm. Component of a multiprotein complex required for the assembly of the RNA endonuclease module of the integrator complex. Associates with INTS9 and INTS11 in the cytoplasm and blocks the active site of INTS11 to inhibit the endonuclease activity of INTS11 before formation of the full integrator complex. Following dissociation of WDR73 of the complex, BRAT1 facilitates the nuclear import of the INTS9-INTS11 heterodimer. In the nucleus, INTS4 is integrated to the INTS9-INTS11 heterodimer and BRAT1 is released from the mature RNA endonuclease module by inositol hexakisphosphate (InsP6). BRAT1 is also involved in DNA damage response; activates kinases ATM, SMC1A and PRKDC by modulating their phosphorylation status following ionizing radiation (IR) stress. Plays a role in regulating mitochondrial function and cell proliferation. Required for protein stability of MTOR and MTOR-related proteins, and cell cycle progress by growth factors. This is Integrator complex assembly factor BRAT1 from Homo sapiens (Human).